The following is a 901-amino-acid chain: Protein translocase subunit SecA (901 aa).

ATP contacts are provided by residues glutamine 85, 103–107 (GEGKT), and aspartate 510. Residues 836–845 (EEAERARQEM) are compositionally biased toward basic and acidic residues. Residues 836 to 901 (EEAERARQEM…HCHGSRVARQ (66 aa)) form a disordered region. The segment covering 849–866 (INQNNLPVDENSQTTQNS) has biased composition (polar residues). The Zn(2+) site is built by cysteine 882, cysteine 884, cysteine 893, and histidine 894. Residues 888-901 (KKYKHCHGSRVARQ) show a composition bias toward basic residues.

The protein belongs to the SecA family. In terms of assembly, monomer and homodimer. Part of the essential Sec protein translocation apparatus which comprises SecA, SecYEG and auxiliary proteins SecDF-YajC and YidC. The cofactor is Zn(2+).

The protein localises to the cell inner membrane. The protein resides in the cytoplasm. The catalysed reaction is ATP + H2O + cellular proteinSide 1 = ADP + phosphate + cellular proteinSide 2.. In terms of biological role, part of the Sec protein translocase complex. Interacts with the SecYEG preprotein conducting channel. Has a central role in coupling the hydrolysis of ATP to the transfer of proteins into and across the cell membrane, serving both as a receptor for the preprotein-SecB complex and as an ATP-driven molecular motor driving the stepwise translocation of polypeptide chains across the membrane. The sequence is that of Protein translocase subunit SecA from Haemophilus influenzae (strain PittEE).